The sequence spans 163 residues: UPF0763 protein C8J_0930 (163 aa).

The protein belongs to the UPF0763 family.

The sequence is that of UPF0763 protein C8J_0930 from Campylobacter jejuni subsp. jejuni serotype O:6 (strain 81116 / NCTC 11828).